The sequence spans 95 residues: Aspartyl/glutamyl-tRNA(Asn/Gln) amidotransferase subunit C (95 aa).

Belongs to the GatC family. Heterotrimer of A, B and C subunits.

It catalyses the reaction L-glutamyl-tRNA(Gln) + L-glutamine + ATP + H2O = L-glutaminyl-tRNA(Gln) + L-glutamate + ADP + phosphate + H(+). The catalysed reaction is L-aspartyl-tRNA(Asn) + L-glutamine + ATP + H2O = L-asparaginyl-tRNA(Asn) + L-glutamate + ADP + phosphate + 2 H(+). Allows the formation of correctly charged Asn-tRNA(Asn) or Gln-tRNA(Gln) through the transamidation of misacylated Asp-tRNA(Asn) or Glu-tRNA(Gln) in organisms which lack either or both of asparaginyl-tRNA or glutaminyl-tRNA synthetases. The reaction takes place in the presence of glutamine and ATP through an activated phospho-Asp-tRNA(Asn) or phospho-Glu-tRNA(Gln). This is Aspartyl/glutamyl-tRNA(Asn/Gln) amidotransferase subunit C from Azorhizobium caulinodans (strain ATCC 43989 / DSM 5975 / JCM 20966 / LMG 6465 / NBRC 14845 / NCIMB 13405 / ORS 571).